The primary structure comprises 162 residues: uncharacterized protein (162 aa).

This is an uncharacterized protein from Acanthamoeba polyphaga (Amoeba).